The chain runs to 232 residues: Ribose-5-phosphate isomerase A (232 aa).

Substrate contacts are provided by residues 31–34 (TGST), 88–91 (DGAD), and 101–104 (KGGG). Residue Glu-110 is the Proton acceptor of the active site. Lys-128 serves as a coordination point for substrate.

Belongs to the ribose 5-phosphate isomerase family. In terms of assembly, homodimer.

The enzyme catalyses aldehydo-D-ribose 5-phosphate = D-ribulose 5-phosphate. It participates in carbohydrate degradation; pentose phosphate pathway; D-ribose 5-phosphate from D-ribulose 5-phosphate (non-oxidative stage): step 1/1. In terms of biological role, catalyzes the reversible conversion of ribose-5-phosphate to ribulose 5-phosphate. The protein is Ribose-5-phosphate isomerase A of Lactobacillus gasseri (strain ATCC 33323 / DSM 20243 / BCRC 14619 / CIP 102991 / JCM 1131 / KCTC 3163 / NCIMB 11718 / NCTC 13722 / AM63).